The chain runs to 258 residues: Pimeloyl-[acyl-carrier protein] methyl ester esterase (258 aa).

Residues tryptophan 22, 84–85, and 145–149 each bind substrate; these read SL and FLAIQ. Serine 84 functions as the Nucleophile in the catalytic mechanism. Residues aspartate 209 and histidine 238 contribute to the active site. Histidine 238 is a substrate binding site.

This sequence belongs to the AB hydrolase superfamily. Carboxylesterase BioH family. In terms of assembly, monomer.

The protein localises to the cytoplasm. It carries out the reaction 6-carboxyhexanoyl-[ACP] methyl ester + H2O = 6-carboxyhexanoyl-[ACP] + methanol + H(+). The protein operates within cofactor biosynthesis; biotin biosynthesis. In terms of biological role, the physiological role of BioH is to remove the methyl group introduced by BioC when the pimeloyl moiety is complete. It allows to synthesize pimeloyl-ACP via the fatty acid synthetic pathway through the hydrolysis of the ester bonds of pimeloyl-ACP esters. The protein is Pimeloyl-[acyl-carrier protein] methyl ester esterase of Pseudoalteromonas atlantica (strain T6c / ATCC BAA-1087).